The chain runs to 2209 residues: Orsellinic acid synthase armB (2209 aa).

Residues 38 to 261 (LLLDACYYAF…HKTTVDALYH (224 aa)) form an N-terminal acylcarrier protein transacylase domain (SAT) region. The 427-residue stretch at 391-817 (QEPIAICGMS…GSNGALLLEE (427 aa)) folds into the Ketosynthase family 3 (KS3) domain. Active-site for beta-ketoacyl synthase activity residues include Cys-561, His-696, and His-736. The interval 914-1239 (VFVFSGQGGQ…NLTLSSSLSQ (326 aa)) is malonyl-CoA:ACP transacylase (MAT) domain. Residue Ser-1008 is the For acyl/malonyl transferase activity of the active site. The interval 1306-1436 (MLQSWAQFPS…GQFRPLLVAD (131 aa)) is N-terminal hotdog fold. The PKS/mFAS DH domain maps to 1306 to 1613 (MLQSWAQFPS…FKKLRLNTLQ (308 aa)). Positions 1335–1610 (ITGHIVGDVP…GMCFKKLRLN (276 aa)) are product template (PT) domain. The active-site Proton acceptor; for dehydratase activity is the His-1338. A C-terminal hotdog fold region spans residues 1463 to 1613 (AEVITTRTAY…FKKLRLNTLQ (151 aa)). The active-site Proton donor; for dehydratase activity is the Asp-1524. 2 Carrier domains span residues 1659–1734 (VDVQ…SSTI) and 1844–1921 (SSSS…SSKQ). O-(pantetheine 4'-phosphoryl)serine is present on residues Ser-1693 and Ser-1881. The disordered stretch occupies residues 1917 to 1945 (ISSKQPGKSPKPSEEATMDPDKEEDLSDL). Residues 1932-1943 (ATMDPDKEEDLS) show a composition bias toward acidic residues. Residues 1962–2201 (VPMSVQKSSS…LGAVTQALVD (240 aa)) form a thioesterase (TE) domain region.

The catalysed reaction is 3 malonyl-CoA + acetyl-CoA + 2 H(+) = orsellinate + 3 CO2 + 4 CoA. Its pathway is secondary metabolite biosynthesis. Its function is as follows. Non-reducing polyketide synthase, part of the gene cluster that mediates the biosynthesis of melleolides, a range of antifungal and phytotoxic polyketide derivatives composed of an orsellinic acid (OA) moiety esterified to various sesquiterpene alcohols. The first step in melleolides biosynthesis is performed by the delta(6)-protoilludene synthase PRO1 which catalyzes the cyclization of farnesyl diphosphate to protoilludene. The orsellinic acid synthase armB produces OA by condensing acetyl-CoA with 3 malonyl-CoA units in a three-round chain elongation reaction folowed by a C2-C7 ring closure. ArmB further catalyzes the trans-esterification of OA to the various sesquiterpene alcohols resulting from the hydroxylation of protoilludene. The melleolides cluster also includes 5 cytochrome P450 monooxygenases, 4 NAD(+)-dependent oxidoreductases, one flavin-dependent oxidoreductase, and one O-methyltransferase. The cytochrome P450 monooxygenases may be involved in protoilludene hydroxylation to elaborate melleolides with multiple alcohol groups, such as melleolide D, which carries alcohol functionalities at C-4, C-5, C-10, and C-13. The role of the NAD(+)-dependent enzymes remains unknown. Numerous melleolides, including arnamial, show 5'-O-methylation of the aromatic moiety which may be catalyzed by the methyltransferase encoded in the cluster. The flavin-dependent oxidoreductase might represent the dehydrogenase yielding the aldehyde in position 1 of arnamial and other melleolides. Finally, several halogenase localized outside of the cluster (armH1 to armH5), are able to catalyze the transfer of a single chlorine atom to the melleolide backbone, resulting in a 6'-chloromelleolide product. In Armillaria mellea (Honey mushroom), this protein is Orsellinic acid synthase armB.